A 122-amino-acid chain; its full sequence is Acidic phospholipase A2 2 (122 aa).

Disulfide bonds link cysteine 26–cysteine 115, cysteine 28–cysteine 44, cysteine 43–cysteine 95, cysteine 49–cysteine 122, cysteine 50–cysteine 88, cysteine 57–cysteine 81, and cysteine 75–cysteine 86. Residues tyrosine 27, glycine 29, and glycine 31 each coordinate Ca(2+). Residue histidine 47 is part of the active site. Aspartate 48 serves as a coordination point for Ca(2+). Residue aspartate 89 is part of the active site.

This sequence belongs to the phospholipase A2 family. Group II subfamily. D49 sub-subfamily. Ca(2+) is required as a cofactor. Expressed by the venom gland.

The protein resides in the secreted. The enzyme catalyses a 1,2-diacyl-sn-glycero-3-phosphocholine + H2O = a 1-acyl-sn-glycero-3-phosphocholine + a fatty acid + H(+). Snake venom phospholipase A2 (PLA2) that has high lipolytic activity. PLA2 catalyzes the calcium-dependent hydrolysis of the 2-acyl groups in 3-sn-phosphoglycerides. The protein is Acidic phospholipase A2 2 of Craspedocephalus gramineus (Bamboo pit viper).